We begin with the raw amino-acid sequence, 1175 residues long: Topoisomerase 1-associated factor 1 (1175 aa).

Disordered stretches follow at residues 894–982 and 1043–1175; these read NYQS…DDEK and SDGD…DDEE. The segment covering 910–921 has biased composition (basic residues); that stretch reads AKKRNSRKKSTK. Positions 930–940 are enriched in acidic residues; it reads GDSDDDDDDAD. Basic and acidic residues predominate over residues 954 to 966; the sequence is PRDLLFEEPKPLR. The span at 1044–1053 shows a compositional bias: acidic residues; the sequence is DGDDDDDDGN. Residues 1078–1096 are compositionally biased toward polar residues; that stretch reads ILDSVQSQVLDNGSSQGNF. The segment covering 1137-1156 has biased composition (acidic residues); it reads EEDDNADEDEDEDEDVDGEE.

The protein belongs to the timeless family. In terms of assembly, component of the fork protection complex (FPC) consisting of TOF1 and CSM3.

It localises to the nucleus. Its function is as follows. Forms a fork protection complex (FPC) with CSM3 and which is required for chromosome segregation during meiosis and DNA damage repair. FPC coordinates leading and lagging strand synthesis and moves with the replication fork. FPC stabilizes replication forks in a configuration that is recognized by replication checkpoint sensors. This is Topoisomerase 1-associated factor 1 (TOF1) from Lodderomyces elongisporus (strain ATCC 11503 / CBS 2605 / JCM 1781 / NBRC 1676 / NRRL YB-4239) (Yeast).